The chain runs to 131 residues: D-ribose pyranase (131 aa).

Residue histidine 20 is the Proton donor of the active site. Substrate contacts are provided by residues aspartate 28, histidine 98, and tyrosine 120–asparagine 122.

It belongs to the RbsD / FucU family. RbsD subfamily. Homodecamer.

It is found in the cytoplasm. The catalysed reaction is beta-D-ribopyranose = beta-D-ribofuranose. It participates in carbohydrate metabolism; D-ribose degradation; D-ribose 5-phosphate from beta-D-ribopyranose: step 1/2. Its function is as follows. Catalyzes the interconversion of beta-pyran and beta-furan forms of D-ribose. This Bacillus thuringiensis (strain Al Hakam) protein is D-ribose pyranase.